The chain runs to 333 residues: Holliday junction branch migration complex subunit RuvB (333 aa).

A large ATPase domain (RuvB-L) region spans residues 1-182 (MEERLVSGEV…FGVISRLEYY (182 aa)). ATP is bound by residues leucine 21, arginine 22, glycine 63, lysine 66, threonine 67, threonine 68, 129–131 (EDY), arginine 172, tyrosine 182, and arginine 219. A Mg(2+)-binding site is contributed by threonine 67. The tract at residues 183–253 (HVDQLAQIIE…LAVEALERLQ (71 aa)) is small ATPAse domain (RuvB-S). Positions 256 to 333 (RLGLDQIDHK…THLGMEVPKR (78 aa)) are head domain (RuvB-H). Positions 311 and 316 each coordinate DNA.

Belongs to the RuvB family. As to quaternary structure, homohexamer. Forms an RuvA(8)-RuvB(12)-Holliday junction (HJ) complex. HJ DNA is sandwiched between 2 RuvA tetramers; dsDNA enters through RuvA and exits via RuvB. An RuvB hexamer assembles on each DNA strand where it exits the tetramer. Each RuvB hexamer is contacted by two RuvA subunits (via domain III) on 2 adjacent RuvB subunits; this complex drives branch migration. In the full resolvosome a probable DNA-RuvA(4)-RuvB(12)-RuvC(2) complex forms which resolves the HJ.

It is found in the cytoplasm. It catalyses the reaction ATP + H2O = ADP + phosphate + H(+). The RuvA-RuvB-RuvC complex processes Holliday junction (HJ) DNA during genetic recombination and DNA repair, while the RuvA-RuvB complex plays an important role in the rescue of blocked DNA replication forks via replication fork reversal (RFR). RuvA specifically binds to HJ cruciform DNA, conferring on it an open structure. The RuvB hexamer acts as an ATP-dependent pump, pulling dsDNA into and through the RuvAB complex. RuvB forms 2 homohexamers on either side of HJ DNA bound by 1 or 2 RuvA tetramers; 4 subunits per hexamer contact DNA at a time. Coordinated motions by a converter formed by DNA-disengaged RuvB subunits stimulates ATP hydrolysis and nucleotide exchange. Immobilization of the converter enables RuvB to convert the ATP-contained energy into a lever motion, pulling 2 nucleotides of DNA out of the RuvA tetramer per ATP hydrolyzed, thus driving DNA branch migration. The RuvB motors rotate together with the DNA substrate, which together with the progressing nucleotide cycle form the mechanistic basis for DNA recombination by continuous HJ branch migration. Branch migration allows RuvC to scan DNA until it finds its consensus sequence, where it cleaves and resolves cruciform DNA. In Geobacillus kaustophilus (strain HTA426), this protein is Holliday junction branch migration complex subunit RuvB.